A 426-amino-acid chain; its full sequence is Serine hydroxymethyltransferase (426 aa).

(6S)-5,6,7,8-tetrahydrofolate is bound by residues Leu-118 and Gly-122–Leu-124. Lys-227 is subject to N6-(pyridoxal phosphate)lysine.

This sequence belongs to the SHMT family. As to quaternary structure, homodimer. Pyridoxal 5'-phosphate is required as a cofactor.

The protein resides in the cytoplasm. It catalyses the reaction (6R)-5,10-methylene-5,6,7,8-tetrahydrofolate + glycine + H2O = (6S)-5,6,7,8-tetrahydrofolate + L-serine. It participates in one-carbon metabolism; tetrahydrofolate interconversion. Its pathway is amino-acid biosynthesis; glycine biosynthesis; glycine from L-serine: step 1/1. Its function is as follows. Catalyzes the reversible interconversion of serine and glycine with tetrahydrofolate (THF) serving as the one-carbon carrier. This reaction serves as the major source of one-carbon groups required for the biosynthesis of purines, thymidylate, methionine, and other important biomolecules. Also exhibits THF-independent aldolase activity toward beta-hydroxyamino acids, producing glycine and aldehydes, via a retro-aldol mechanism. The protein is Serine hydroxymethyltransferase of Mycobacterium avium (strain 104).